Consider the following 174-residue polypeptide: Mitochondrial holo-[acyl-carrier-protein] synthase (174 aa).

The protein belongs to the P-Pant transferase superfamily. AcpS family.

The protein resides in the mitochondrion. It carries out the reaction apo-[ACP] + CoA = holo-[ACP] + adenosine 3',5'-bisphosphate + H(+). In terms of biological role, transfers the 4'-phosphopantetheine moiety from coenzyme A to a Ser of mitochondrial acyl-carrier-protein. The sequence is that of Mitochondrial holo-[acyl-carrier-protein] synthase (PPT2) from Eremothecium gossypii (strain ATCC 10895 / CBS 109.51 / FGSC 9923 / NRRL Y-1056) (Yeast).